The primary structure comprises 287 residues: Probable endonuclease 4 (287 aa).

9 residues coordinate Zn(2+): H69, H109, E144, D178, H181, H215, D228, H230, and E260.

Belongs to the AP endonuclease 2 family. The cofactor is Zn(2+).

It catalyses the reaction Endonucleolytic cleavage to 5'-phosphooligonucleotide end-products.. In terms of biological role, endonuclease IV plays a role in DNA repair. It cleaves phosphodiester bonds at apurinic or apyrimidinic (AP) sites, generating a 3'-hydroxyl group and a 5'-terminal sugar phosphate. The polypeptide is Probable endonuclease 4 (Thermotoga petrophila (strain ATCC BAA-488 / DSM 13995 / JCM 10881 / RKU-1)).